We begin with the raw amino-acid sequence, 638 residues long: Phosphomethylpyrimidine synthase (638 aa).

Residues Asn-235, Met-264, Tyr-293, His-329, 349-351, 390-393, and Glu-429 contribute to the substrate site; these read SRG and DGLR. Position 433 (His-433) interacts with Zn(2+). Tyr-456 contacts substrate. Residue His-497 coordinates Zn(2+). [4Fe-4S] cluster-binding residues include Cys-577, Cys-580, and Cys-585.

The protein belongs to the ThiC family. In terms of assembly, homodimer. It depends on [4Fe-4S] cluster as a cofactor.

It catalyses the reaction 5-amino-1-(5-phospho-beta-D-ribosyl)imidazole + S-adenosyl-L-methionine = 4-amino-2-methyl-5-(phosphooxymethyl)pyrimidine + CO + 5'-deoxyadenosine + formate + L-methionine + 3 H(+). It participates in cofactor biosynthesis; thiamine diphosphate biosynthesis. Functionally, catalyzes the synthesis of the hydroxymethylpyrimidine phosphate (HMP-P) moiety of thiamine from aminoimidazole ribotide (AIR) in a radical S-adenosyl-L-methionine (SAM)-dependent reaction. This Polaromonas naphthalenivorans (strain CJ2) protein is Phosphomethylpyrimidine synthase.